Reading from the N-terminus, the 375-residue chain is Platelet-derived growth factor receptor-like protein (375 aa).

An N-terminal signal peptide occupies residues 1 to 21 (MKIWLLLGLLLMHEALEDVTG). Positions 20–64 (TGQHPPKNKRPKEPGENRIKPTNKKVKPKIPKIKDRDSADPTPKT) are disordered. A compositionally biased stretch (basic residues) spans 40 to 50 (PTNKKVKPKIP). One can recognise an Ig-like C2-type 1 domain in the interval 62–159 (PKTQSIMTQM…GYVCRRDEAK (98 aa)). C96 and C143 are oxidised to a cystine. Residues N132 and N219 are each glycosylated (N-linked (GlcNAc...) asparagine). One can recognise an Ig-like C2-type 2 domain in the interval 272-373 (PSTTILASSN…GQTTVATTVE (102 aa)). C293 and C357 are disulfide-bonded.

As to quaternary structure, forms a complex composed of PDGFRL, TNK2 and GRB2.

It is found in the secreted. The chain is Platelet-derived growth factor receptor-like protein (PDGFRL) from Bos taurus (Bovine).